A 358-amino-acid chain; its full sequence is GDSL esterase/lipase EXL5 (358 aa).

The first 21 residues, 1–21, serve as a signal peptide directing secretion; the sequence is MFRKKMLVLALFSIYFLSIEA. Residue Asn24 is glycosylated (N-linked (GlcNAc...) asparagine). The active-site Nucleophile is Ser36. Catalysis depends on residues Asp333 and His336.

The protein belongs to the 'GDSL' lipolytic enzyme family. As to expression, flower buds.

Its subcellular location is the secreted. The sequence is that of GDSL esterase/lipase EXL5 (EXL5) from Arabidopsis thaliana (Mouse-ear cress).